We begin with the raw amino-acid sequence, 215 residues long: Protein C' (215 aa).

Residues 12–34 are disordered; it reads MPSFLKKILKLRGRRQEDESRSR. The tract at residues 15–22 is involved in self-degradation and in host STAT1 degradation; that stretch reads FLKKILKL.

The protein belongs to the respirovirus protein C family. In terms of assembly, the different isoforms interact (via C-terminus) with unphosphorylated and phosphorylated human STAT1 (via N-terminus), favoring the formation of parallel STAT1 homodimers. The different isoforms do not interact with host STAT2. C protein interacts with L protein; this interaction has an inhibitory effect on viral transcription and replication. Post-translationally, Y1 and Y2 proteins are produced not only by alternative initiation, but also by proteolytic cleavage of C'. Only alternative initiation is detected in vitro, whereas in vivo cleavage seems to be predominant.

The protein localises to the host cytoplasm. The different products prevent the establishment of cellular antiviral state by blocking the interferon-alpha/beta (IFN-alpha/beta) and IFN-gamma signaling pathways. They inhibit IFN-alpha/beta induced tyrosine phosphorylation of STAT1 and STAT2. Blocking the IFN-alpha/beta pathway requires binding to STAT1 in the cytoplasm. They inhibit IFN-gamma induced serine phosphorylation of STAT1. Block the IFN-gamma pathway by binding to and stabilizing the parallel form of the STAT1 dimer, further inducing high-molecular-weight complex formation and inhibition of transcription by IFN-gamma. May also have a role in preventing the cell to enter apoptosis. Modulate regulation of viral transcription and replication. Overexpression inhibits the viral RNA polymerase. The absence of all C', C, Y1 and Y2 proteins leads to viral delayed growth. Plays an important role in virion particles release. Modulates virion shape. The chain is Protein C' (P/V/C) from Sendai virus (strain Nagoya) (SeV).